The primary structure comprises 324 residues: Dolichyl-phosphate beta-glucosyltransferase (324 aa).

Residues 1–7 lie on the Lumenal side of the membrane; that stretch reads MATLLLQ. A helical membrane pass occupies residues 8–28; that stretch reads LLGLGVALAAAALILVSIVAF. Over 29-324 the chain is Cytoplasmic; it reads ITATKMPPCY…WRLKQTRKAS (296 aa).

This sequence belongs to the glycosyltransferase 2 family.

The protein localises to the endoplasmic reticulum membrane. It carries out the reaction a di-trans,poly-cis-dolichyl phosphate + UDP-alpha-D-glucose = a di-trans,poly-cis-dolichyl beta-D-glucosyl phosphate + UDP. It functions in the pathway protein modification; protein glycosylation. In terms of biological role, dolichyl-phosphate beta-glucosyltransferase that operates in the biosynthetic pathway of dolichol-linked oligosaccharides, the glycan precursors employed in protein asparagine (N)-glycosylation. The assembly of dolichol-linked oligosaccharides begins on the cytosolic side of the endoplasmic reticulum membrane and finishes in its lumen. The sequential addition of sugars to dolichol pyrophosphate produces dolichol-linked oligosaccharides containing fourteen sugars, including two GlcNAcs, nine mannoses and three glucoses. Once assembled, the oligosaccharide is transferred from the lipid to nascent proteins by oligosaccharyltransferases. Dolichyl-phosphate beta-glucosyltransferase produces dolichyl beta-D-glucosyl phosphate/Dol-P-Glc, the glucose donor substrate used sequentially by ALG6, ALG8 and ALG10 to add glucose residues on top of the Man(9)GlcNAc(2)-PP-Dol structure. These are the three last steps in the biosynthetic pathway of dolichol-linked oligosaccharides to produce Glc(3)Man(9)GlcNAc(2)-PP-Dol. The enzyme is most probably active on the cytoplasmic side of the endoplasmic reticulum while its product Dol-P-Glc is the substrate for ALG6, ALG8 and ALG11 in the lumen of the endoplasmic reticulum. The chain is Dolichyl-phosphate beta-glucosyltransferase from Mus musculus (Mouse).